The primary structure comprises 318 residues: MNQLEYLKKYTTVVVDSGDINYIKKYQPNDATTNPTLILKSVLSNKYNYIIDNSIQYAKDIGGNKLTQVKNASDMISVGFGIEILKYIPGYISTEIDARLSFNTKKCVSKAIKLIKLYNNNGIDTSRVLIKLAATWECIEAARQLKKIGILCNLTLLFSFAQARACADADVFLISPFVGRIYDWYQKFNLNSPYCSNTDPGVIALKKIFFYYKKYGYKTIIMGASFRKLEQIQELVGCDRITISLDLLKQLSMKKDILIKKLDVKKITKVNTKPNALSESEFRFLHNEDAMAVEKLSEGIRQFSSDQQELENFLFDKL.

The Schiff-base intermediate with substrate role is filled by lysine 131.

The protein belongs to the transaldolase family. Type 1 subfamily. In terms of assembly, homodimer.

It localises to the cytoplasm. The enzyme catalyses D-sedoheptulose 7-phosphate + D-glyceraldehyde 3-phosphate = D-erythrose 4-phosphate + beta-D-fructose 6-phosphate. The protein operates within carbohydrate degradation; pentose phosphate pathway; D-glyceraldehyde 3-phosphate and beta-D-fructose 6-phosphate from D-ribose 5-phosphate and D-xylulose 5-phosphate (non-oxidative stage): step 2/3. Functionally, transaldolase is important for the balance of metabolites in the pentose-phosphate pathway. The polypeptide is Transaldolase (Buchnera aphidicola subsp. Cinara cedri (strain Cc)).